Consider the following 459-residue polypeptide: Argininosuccinate lyase (459 aa).

Belongs to the lyase 1 family. Argininosuccinate lyase subfamily.

The protein localises to the cytoplasm. The catalysed reaction is 2-(N(omega)-L-arginino)succinate = fumarate + L-arginine. Its pathway is amino-acid biosynthesis; L-arginine biosynthesis; L-arginine from L-ornithine and carbamoyl phosphate: step 3/3. This chain is Argininosuccinate lyase, found in Prochlorococcus marinus (strain MIT 9515).